The following is a 284-amino-acid chain: 4-hydroxy-3-methylbut-2-enyl diphosphate reductase (284 aa).

[4Fe-4S] cluster is bound at residue Cys-12. Residues His-40 and His-72 each contribute to the (2E)-4-hydroxy-3-methylbut-2-enyl diphosphate site. Residues His-40 and His-72 each coordinate dimethylallyl diphosphate. His-40 and His-72 together coordinate isopentenyl diphosphate. Cys-94 serves as a coordination point for [4Fe-4S] cluster. His-122 serves as a coordination point for (2E)-4-hydroxy-3-methylbut-2-enyl diphosphate. Dimethylallyl diphosphate is bound at residue His-122. His-122 is a binding site for isopentenyl diphosphate. Residue Glu-124 is the Proton donor of the active site. Thr-161 is a binding site for (2E)-4-hydroxy-3-methylbut-2-enyl diphosphate. Residue Cys-193 coordinates [4Fe-4S] cluster. Residues Ser-221, Asn-223, and Ser-264 each contribute to the (2E)-4-hydroxy-3-methylbut-2-enyl diphosphate site. Residues Ser-221, Asn-223, and Ser-264 each coordinate dimethylallyl diphosphate. Isopentenyl diphosphate-binding residues include Ser-221, Asn-223, and Ser-264.

It belongs to the IspH family. It depends on [4Fe-4S] cluster as a cofactor.

The catalysed reaction is isopentenyl diphosphate + 2 oxidized [2Fe-2S]-[ferredoxin] + H2O = (2E)-4-hydroxy-3-methylbut-2-enyl diphosphate + 2 reduced [2Fe-2S]-[ferredoxin] + 2 H(+). The enzyme catalyses dimethylallyl diphosphate + 2 oxidized [2Fe-2S]-[ferredoxin] + H2O = (2E)-4-hydroxy-3-methylbut-2-enyl diphosphate + 2 reduced [2Fe-2S]-[ferredoxin] + 2 H(+). Its pathway is isoprenoid biosynthesis; dimethylallyl diphosphate biosynthesis; dimethylallyl diphosphate from (2E)-4-hydroxy-3-methylbutenyl diphosphate: step 1/1. It functions in the pathway isoprenoid biosynthesis; isopentenyl diphosphate biosynthesis via DXP pathway; isopentenyl diphosphate from 1-deoxy-D-xylulose 5-phosphate: step 6/6. In terms of biological role, catalyzes the conversion of 1-hydroxy-2-methyl-2-(E)-butenyl 4-diphosphate (HMBPP) into a mixture of isopentenyl diphosphate (IPP) and dimethylallyl diphosphate (DMAPP). Acts in the terminal step of the DOXP/MEP pathway for isoprenoid precursor biosynthesis. This Dehalococcoides mccartyi (strain ATCC BAA-2100 / JCM 16839 / KCTC 5957 / BAV1) protein is 4-hydroxy-3-methylbut-2-enyl diphosphate reductase.